Consider the following 300-residue polypeptide: Arrestin domain-containing protein 4 (300 aa).

2 consecutive short sequence motifs (PPxY motif) follow at residues 231 to 234 and 276 to 279; these read PPNY and PPLY.

The protein belongs to the arrestin family. Interacts with ADRB2. Interacts (via PPxY motifs) with ITCH, NEDD4L and WWP2. Interacts with AVPR2. Identified in a complex containing at least ARRDC4, AVPR2 and HGS. Interacts with SLC11A2; controls the incorporation of SLC11A2 into extracellular vesicles through an ubiquitination-dependent mechanism. Interacts with TRIM65.

The protein resides in the early endosome. Its subcellular location is the cell membrane. The protein localises to the cytoplasmic vesicle. Functions as an adapter recruiting ubiquitin-protein ligases to their specific substrates. Plays a role in endocytosis of activated G protein-coupled receptors (GPCRs) Through an ubiquitination-dependent mechanism also plays a role in the incorporation of SLC11A2 into extracellular vesicles. May play a role in glucose uptake. Participates in innate immune response by promoting IFIH1/MDA5 activation through interaction with TRIM65. The sequence is that of Arrestin domain-containing protein 4 (Arrdc4) from Rattus norvegicus (Rat).